The sequence spans 475 residues: Tubulin gamma-1 chain (475 aa).

142–148 is a GTP binding site; sequence AGGTGSG. A disordered region spans residues 453 to 475; sequence VKRGNGPVDSKSEDSRSVTSAGS.

Belongs to the tubulin family. Interacts with Ote.

The protein localises to the cytoplasm. Its subcellular location is the cytoskeleton. It localises to the microtubule organizing center. It is found in the centrosome. The protein resides in the perinuclear region. In terms of biological role, tubulin is the major constituent of microtubules. The gamma chain is found at microtubule organizing centers (MTOC) such as the spindle poles or the centrosome, suggesting that it is involved in the minus-end nucleation of microtubule assembly. The sequence is that of Tubulin gamma-1 chain (gammaTub23C) from Drosophila melanogaster (Fruit fly).